The sequence spans 107 residues: Phosphoribosyl-ATP pyrophosphatase (107 aa).

The protein belongs to the PRA-PH family.

Its subcellular location is the cytoplasm. The catalysed reaction is 1-(5-phospho-beta-D-ribosyl)-ATP + H2O = 1-(5-phospho-beta-D-ribosyl)-5'-AMP + diphosphate + H(+). It functions in the pathway amino-acid biosynthesis; L-histidine biosynthesis; L-histidine from 5-phospho-alpha-D-ribose 1-diphosphate: step 2/9. The protein is Phosphoribosyl-ATP pyrophosphatase (hisE) of Mesorhizobium japonicum (strain LMG 29417 / CECT 9101 / MAFF 303099) (Mesorhizobium loti (strain MAFF 303099)).